The chain runs to 322 residues: AA9 family lytic polysaccharide monooxygenase A (322 aa).

The N-terminal stretch at 1–15 (MKVLSLLAAASAASA) is a signal peptide. 2 residues coordinate Cu(2+): His-16 and His-96. 2 disulfide bridges follow: Cys-54-Cys-182 and Cys-152-Cys-237. O2 is bound by residues His-168 and Gln-177. 2 O-linked (Man...) threonine glycosylation sites follow: Thr-228 and Thr-236. Residues 286-322 (CTAAQWAQCGGMGFSGCTTCASPYTCKKMNDYYSQCS) enclose the CBM1 domain.

It belongs to the polysaccharide monooxygenase AA9 family. The cofactor is Cu(2+).

It is found in the secreted. The catalysed reaction is [(1-&gt;4)-beta-D-glucosyl]n+m + reduced acceptor + O2 = 4-dehydro-beta-D-glucosyl-[(1-&gt;4)-beta-D-glucosyl]n-1 + [(1-&gt;4)-beta-D-glucosyl]m + acceptor + H2O.. Functionally, lytic polysaccharide monooxygenase (LPMO) that depolymerizes crystalline and amorphous polysaccharides via the oxidation of scissile alpha- or beta-(1-4)-glycosidic bonds, yielding C4 oxidation products. Catalysis by LPMOs requires the reduction of the active-site copper from Cu(II) to Cu(I) by a reducing agent and H(2)O(2) or O(2) as a cosubstrate. Active on tamarind xyloglucan and konjac glucomannan. The polypeptide is AA9 family lytic polysaccharide monooxygenase A (gh61-1) (Neurospora crassa (strain ATCC 24698 / 74-OR23-1A / CBS 708.71 / DSM 1257 / FGSC 987)).